Consider the following 481-residue polypeptide: 4-O-methyl-glucuronoyl methylesterase (481 aa).

An N-terminal signal peptide occupies residues 1 to 21 (MVSQTVVSSLLVVLGAAGVRA). The 37-residue stretch at 23-59 (QRQSLWGQCGGSGWSGPTLCVDGAWCNPQNQWYHQCI) folds into the CBM1 domain. Intrachain disulfides connect Cys-108-Cys-143, Cys-292-Cys-428, and Cys-324-Cys-400. The GXSYXG catalytic site motif signature appears at 291-296 (GCSRNG). The active-site Nucleophile is Ser-293. Residues Lys-297, Gln-339, Glu-347, and Trp-391 each coordinate substrate. Residue His-427 is the Proton donor/acceptor of the active site.

This sequence belongs to the carbohydrate esterase 15 (CE15) family.

It localises to the secreted. The enzyme catalyses a 4-O-methyl-alpha-D-glucuronosyl ester derivative + H2O = 4-O-methyl-alpha-D-glucuronate derivative + an alcohol + H(+). Functionally, glucuronoyl esterase which may play a significant role in biomass degradation, as it is considered to disconnect hemicellulose from lignin through the hydrolysis of the ester bond between 4-O-methyl-D-glucuronic acid residues of glucuronoxylans and aromatic alcohols of lignin. In Podospora anserina (strain S / ATCC MYA-4624 / DSM 980 / FGSC 10383) (Pleurage anserina), this protein is 4-O-methyl-glucuronoyl methylesterase.